The chain runs to 257 residues: UPF0246 protein Lcho_2652 (257 aa).

This sequence belongs to the UPF0246 family.

This is UPF0246 protein Lcho_2652 from Leptothrix cholodnii (strain ATCC 51168 / LMG 8142 / SP-6) (Leptothrix discophora (strain SP-6)).